We begin with the raw amino-acid sequence, 341 residues long: Phenylalanine--tRNA ligase alpha subunit (341 aa).

A Mg(2+)-binding site is contributed by glutamate 256.

It belongs to the class-II aminoacyl-tRNA synthetase family. Phe-tRNA synthetase alpha subunit type 1 subfamily. In terms of assembly, tetramer of two alpha and two beta subunits. Mg(2+) serves as cofactor.

It is found in the cytoplasm. The catalysed reaction is tRNA(Phe) + L-phenylalanine + ATP = L-phenylalanyl-tRNA(Phe) + AMP + diphosphate + H(+). This Leptospira borgpetersenii serovar Hardjo-bovis (strain JB197) protein is Phenylalanine--tRNA ligase alpha subunit.